A 210-amino-acid chain; its full sequence is Small ribosomal subunit protein uS7 (210 aa).

The protein belongs to the universal ribosomal protein uS7 family. Component of the small ribosomal subunit. Part of the small subunit (SSU) processome, composed of more than 70 proteins and the RNA chaperone small nucleolar RNA (snoRNA) U3.

Its subcellular location is the cytoplasm. The protein localises to the nucleus. It is found in the nucleolus. In terms of biological role, component of the small ribosomal subunit. The ribosome is a large ribonucleoprotein complex responsible for the synthesis of proteins in the cell. Part of the small subunit (SSU) processome, first precursor of the small eukaryotic ribosomal subunit. During the assembly of the SSU processome in the nucleolus, many ribosome biogenesis factors, an RNA chaperone and ribosomal proteins associate with the nascent pre-rRNA and work in concert to generate RNA folding, modifications, rearrangements and cleavage as well as targeted degradation of pre-ribosomal RNA by the RNA exosome. The chain is Small ribosomal subunit protein uS7 (rps-5) from Caenorhabditis elegans.